We begin with the raw amino-acid sequence, 134 residues long: MVKIRLRRAGRKKLPVYQIVAADARAPRDGKFLEVIGHYQPTAKPHAITLDKERVAYWLGVGAQPTTTAHSLIRATGLLHEMNMKRKGRSEEEIAAEMEQWQARQNERREKRLAIKTRRRQAKKAAEAEGQESA.

Positions 105-134 (QNERREKRLAIKTRRRQAKKAAEAEGQESA) are disordered. The span at 114-123 (AIKTRRRQAK) shows a compositional bias: basic residues.

The protein belongs to the bacterial ribosomal protein bS16 family.

This Chlorobium phaeobacteroides (strain BS1) protein is Small ribosomal subunit protein bS16.